A 445-amino-acid polypeptide reads, in one-letter code: Argininosuccinate synthase (445 aa).

ATP-binding positions include 17-25 and A43; that span reads AFSGGLDTS. Residue Y99 coordinates L-citrulline. The ATP site is built by G129 and T131. L-aspartate contacts are provided by T131, N135, and D136. An L-citrulline-binding site is contributed by N135. Residue D136 participates in ATP binding. 2 residues coordinate L-citrulline: R139 and S192. Position 194 (D194) interacts with ATP. The L-citrulline site is built by T201, E203, and E280.

The protein belongs to the argininosuccinate synthase family. Type 2 subfamily. As to quaternary structure, homotetramer.

The protein localises to the cytoplasm. The enzyme catalyses L-citrulline + L-aspartate + ATP = 2-(N(omega)-L-arginino)succinate + AMP + diphosphate + H(+). It participates in amino-acid biosynthesis; L-arginine biosynthesis; L-arginine from L-ornithine and carbamoyl phosphate: step 2/3. This Herminiimonas arsenicoxydans protein is Argininosuccinate synthase.